The chain runs to 194 residues: Probable thymidylate kinase (194 aa).

An ATP-binding site is contributed by 8–15; sequence GIDGSGKT.

It belongs to the thymidylate kinase family.

The enzyme catalyses dTMP + ATP = dTDP + ADP. This is Probable thymidylate kinase from Sulfolobus acidocaldarius (strain ATCC 33909 / DSM 639 / JCM 8929 / NBRC 15157 / NCIMB 11770).